The chain runs to 103 residues: MYAVIKTGGKQYKVAVGEKLKVEQIPADIDAEITLDQVLAVGEGESIKFGTPLVSGASVKATVVSQGRHAKVTIFKMRRRKHYQKHGGHRQNYTELRIDAINA.

This sequence belongs to the bacterial ribosomal protein bL21 family. In terms of assembly, part of the 50S ribosomal subunit. Contacts protein L20.

In terms of biological role, this protein binds to 23S rRNA in the presence of protein L20. This is Large ribosomal subunit protein bL21 from Paraburkholderia phytofirmans (strain DSM 17436 / LMG 22146 / PsJN) (Burkholderia phytofirmans).